Here is a 333-residue protein sequence, read N- to C-terminus: NADH-quinone oxidoreductase subunit H (333 aa).

8 helical membrane passes run 17-37 (IFFA…TYGI), 88-108 (FILA…ALPF), 117-137 (IGVG…GVVT), 159-179 (ISYE…SGSL), 191-211 (VWFI…AVAE), 241-261 (FFML…TVLF), 273-293 (FIPG…LFIW), and 313-333 (VLLP…QLFF).

Belongs to the complex I subunit 1 family. As to quaternary structure, NDH-1 is composed of 14 different subunits. Subunits NuoA, H, J, K, L, M, N constitute the membrane sector of the complex.

The protein resides in the cell membrane. It catalyses the reaction a quinone + NADH + 5 H(+)(in) = a quinol + NAD(+) + 4 H(+)(out). Functionally, NDH-1 shuttles electrons from NADH, via FMN and iron-sulfur (Fe-S) centers, to quinones in the respiratory chain. The immediate electron acceptor for the enzyme in this species is believed to be ubiquinone. Couples the redox reaction to proton translocation (for every two electrons transferred, four hydrogen ions are translocated across the cytoplasmic membrane), and thus conserves the redox energy in a proton gradient. This subunit may bind ubiquinone. The polypeptide is NADH-quinone oxidoreductase subunit H (Anoxybacillus flavithermus (strain DSM 21510 / WK1)).